The following is a 159-amino-acid chain: Heat shock protein beta-9 (159 aa).

Positions 36–147 (LLRDSPAAQE…EAQTGPSPRL (112 aa)) constitute a sHSP domain.

Belongs to the small heat shock protein (HSP20) family. As to expression, testis specific.

It localises to the cytoplasm. It is found in the nucleus. The chain is Heat shock protein beta-9 (HSPB9) from Homo sapiens (Human).